The sequence spans 571 residues: Hemagglutinin-neuraminidase (571 aa).

Residues 1 to 26 (MDRAVSRVVLENEEREAKNTWRFVFR) are Intravirion-facing. A helical membrane pass occupies residues 27–47 (IAVLLLIVMTLAISAAALVYS). Residues 48–571 (MGASTPRDLA…LVEILKDDRV (524 aa)) are Virion surface-facing. Asn119 carries N-linked (GlcNAc...) asparagine; by host glycosylation. The interval 124 to 152 (GAPVHDPDYIGGIGKELIVDDTSDVTSFY) is important for interaction with fusion/F protein. Cystine bridges form between Cys172–Cys196, Cys186–Cys247, and Cys238–Cys251. The involved in neuraminidase activity stretch occupies residues 234-239 (NRKSCS). N-linked (GlcNAc...) asparagine; by host glycosylation occurs at Asn341. A disulfide bridge links Cys455 with Cys465. Residues Asn481 and Asn508 are each glycosylated (N-linked (GlcNAc...) asparagine; by host). Cys531 and Cys542 are joined by a disulfide.

The protein belongs to the paramyxoviruses hemagglutinin-neuraminidase family. As to quaternary structure, homotetramer; composed of disulfide-linked homodimers. Interacts with F protein trimer. Interacts with host CG-1B; this interaction inhibits viral adsorption and replication rather than internalization.

Its subcellular location is the virion membrane. The protein localises to the host cell membrane. The enzyme catalyses Hydrolysis of alpha-(2-&gt;3)-, alpha-(2-&gt;6)-, alpha-(2-&gt;8)- glycosidic linkages of terminal sialic acid residues in oligosaccharides, glycoproteins, glycolipids, colominic acid and synthetic substrates.. Functionally, mediates the viral entry into the host cell together with fusion/F protein. Attaches the virus to sialic acid-containing cell receptors and thereby initiates infection. Binding of HN protein to the receptor induces a conformational change that allows the F protein to trigger virion/cell membranes fusion. Its function is as follows. Neuraminidase activity ensures the efficient spread of the virus by dissociating the mature virions from the neuraminic acid containing glycoproteins. In Newcastle disease virus (strain Iba/85) (NDV), this protein is Hemagglutinin-neuraminidase (HN).